The following is a 398-amino-acid chain: 1-deoxy-D-xylulose 5-phosphate reductoisomerase (398 aa).

NADPH-binding residues include Thr-10, Gly-11, Ser-12, Ile-13, Gly-36, Lys-37, Asn-38, and Asn-124. 1-deoxy-D-xylulose 5-phosphate is bound at residue Lys-125. Glu-126 is a binding site for NADPH. Asp-150 is a binding site for Mn(2+). 4 residues coordinate 1-deoxy-D-xylulose 5-phosphate: Ser-151, Glu-152, Ser-186, and His-209. Glu-152 is a Mn(2+) binding site. Gly-215 contributes to the NADPH binding site. The 1-deoxy-D-xylulose 5-phosphate site is built by Ser-222, Asn-227, Lys-228, and Glu-231. Position 231 (Glu-231) interacts with Mn(2+).

This sequence belongs to the DXR family. In terms of assembly, homodimer. Mg(2+) is required as a cofactor. It depends on Mn(2+) as a cofactor.

It carries out the reaction 2-C-methyl-D-erythritol 4-phosphate + NADP(+) = 1-deoxy-D-xylulose 5-phosphate + NADPH + H(+). The protein operates within isoprenoid biosynthesis; isopentenyl diphosphate biosynthesis via DXP pathway; isopentenyl diphosphate from 1-deoxy-D-xylulose 5-phosphate: step 1/6. Its function is as follows. Catalyzes the NADPH-dependent rearrangement and reduction of 1-deoxy-D-xylulose-5-phosphate (DXP) to 2-C-methyl-D-erythritol 4-phosphate (MEP). This Salmonella paratyphi A (strain ATCC 9150 / SARB42) protein is 1-deoxy-D-xylulose 5-phosphate reductoisomerase.